Reading from the N-terminus, the 471-residue chain is Ankyrin repeat and death domain-containing protein 1A (471 aa).

10 ANK repeats span residues 19–48, 52–81, 85–114, 120–149, 153–182, 186–215, 219–248, 251–280, 284–313, and 317–346; these read VGRV…AVDE, FGMN…KIHC, DGLT…DVAL, LGRT…DHSV, EGNT…DLEE, EGLT…TVNA, KNLS…CTNV, HGAS…DLNA, RQQT…DLNL, and QGKT…FYKW. Residues 379 to 467 form the Death domain; that stretch reads SVLWRLASRH…DLAELAVASV (89 aa).

The sequence is that of Ankyrin repeat and death domain-containing protein 1A (ANKDD1A) from Macaca fascicularis (Crab-eating macaque).